The primary structure comprises 578 residues: NADH-quinone oxidoreductase subunit C/D (578 aa).

Residues 1 to 167 form an NADH dehydrogenase I subunit C region; sequence MILSLFKLFG…DEFYFTKQKE (167 aa). The segment at 192–578 is NADH dehydrogenase I subunit D; sequence EYMFLNFGPN…IDFVMSDVDR (387 aa).

In the N-terminal section; belongs to the complex I 30 kDa subunit family. It in the C-terminal section; belongs to the complex I 49 kDa subunit family. As to quaternary structure, NDH-1 is composed of 13 different subunits. Subunits NuoB, CD, E, F, and G constitute the peripheral sector of the complex.

The protein resides in the cell inner membrane. The catalysed reaction is a quinone + NADH + 5 H(+)(in) = a quinol + NAD(+) + 4 H(+)(out). Its function is as follows. NDH-1 shuttles electrons from NADH, via FMN and iron-sulfur (Fe-S) centers, to quinones in the respiratory chain. The immediate electron acceptor for the enzyme in this species is believed to be ubiquinone. Couples the redox reaction to proton translocation (for every two electrons transferred, four hydrogen ions are translocated across the cytoplasmic membrane), and thus conserves the redox energy in a proton gradient. This is NADH-quinone oxidoreductase subunit C/D from Buchnera aphidicola subsp. Cinara cedri (strain Cc).